Here is a 163-residue protein sequence, read N- to C-terminus: Transcription elongation factor GreA (163 aa).

A coiled-coil region spans residues 12–73 (YEKIQKEFEA…ELSDLLARAQ (62 aa)).

It belongs to the GreA/GreB family.

Necessary for efficient RNA polymerase transcription elongation past template-encoded arresting sites. The arresting sites in DNA have the property of trapping a certain fraction of elongating RNA polymerases that pass through, resulting in locked ternary complexes. Cleavage of the nascent transcript by cleavage factors such as GreA or GreB allows the resumption of elongation from the new 3'terminus. GreA releases sequences of 2 to 3 nucleotides. This is Transcription elongation factor GreA from Nitratiruptor sp. (strain SB155-2).